A 566-amino-acid polypeptide reads, in one-letter code: Type 3 secretion system secretin (566 aa).

The N-terminal stretch at 1–22 (MKKFNIKSLTLLIVLLPLIVNA) is a signal peptide.

Belongs to the bacterial secretin family. T3SS SctC subfamily. In terms of assembly, the core secretion machinery of the T3SS is composed of approximately 20 different proteins, including cytoplasmic components, a base, an export apparatus and a needle. This subunit is part of the base, which anchors the injectisome in the bacterial cell envelope. Forms a stable homooligomeric complex.

The protein resides in the cell outer membrane. Functionally, component of the type III secretion system (T3SS), also called injectisome, which is used to inject bacterial effector proteins into eukaryotic host cells. Forms a ring-shaped multimeric structure with an apparent central pore in the outer membrane. This Shigella sonnei protein is Type 3 secretion system secretin.